The primary structure comprises 897 residues: Alanine--tRNA ligase (897 aa).

Zn(2+)-binding residues include His-591, His-595, Cys-695, and His-699.

The protein belongs to the class-II aminoacyl-tRNA synthetase family. It depends on Zn(2+) as a cofactor.

It is found in the cytoplasm. The enzyme catalyses tRNA(Ala) + L-alanine + ATP = L-alanyl-tRNA(Ala) + AMP + diphosphate. Functionally, catalyzes the attachment of alanine to tRNA(Ala) in a two-step reaction: alanine is first activated by ATP to form Ala-AMP and then transferred to the acceptor end of tRNA(Ala). Also edits incorrectly charged Ser-tRNA(Ala) and Gly-tRNA(Ala) via its editing domain. This is Alanine--tRNA ligase from Methanobrevibacter smithii (strain ATCC 35061 / DSM 861 / OCM 144 / PS).